A 133-amino-acid chain; its full sequence is Small ribosomal subunit protein uS19 (133 aa).

This sequence belongs to the universal ribosomal protein uS19 family.

Its function is as follows. Protein S19 forms a complex with S13 that binds strongly to the 16S ribosomal RNA. This Thermococcus onnurineus (strain NA1) protein is Small ribosomal subunit protein uS19.